The following is a 449-amino-acid chain: Allantoinase (449 aa).

Positions 61, 63, 148, 184, 240, and 313 each coordinate Zn(2+). Lys148 carries the post-translational modification N6-carboxylysine.

It belongs to the metallo-dependent hydrolases superfamily. Allantoinase family. As to quaternary structure, homotetramer. It depends on Zn(2+) as a cofactor. In terms of processing, carboxylation allows a single lysine to coordinate two zinc ions.

It carries out the reaction (S)-allantoin + H2O = allantoate + H(+). Its pathway is nitrogen metabolism; (S)-allantoin degradation; allantoate from (S)-allantoin: step 1/1. Functionally, catalyzes the conversion of allantoin (5-ureidohydantoin) to allantoic acid by hydrolytic cleavage of the five-member hydantoin ring. In Desulfitobacterium hafniense (strain Y51), this protein is Allantoinase.